The following is a 511-amino-acid chain: Fas-activated serine/threonine kinase (511 aa).

An RAP domain is found at 439–497; sequence VVLMLRERWHFCRDGRVLLGSRALRERHLGLMGYQLLPLPFEELESQRGLPQLKSYLRQ.

This sequence belongs to the FAST protein kinase family. Interacts with TIA1; the interactions leads to TIA1 phosphorylation. Interacts with TIAR. In terms of processing, autophosphorylated on serine/threonine residues. Activated by dephosphorylation.

Its subcellular location is the mitochondrion matrix. It carries out the reaction L-seryl-[Fas-activated protein] + ATP = O-phospho-L-seryl-[Fas-activated protein] + ADP + H(+). It catalyses the reaction L-threonyl-[Fas-activated protein] + ATP = O-phospho-L-threonyl-[Fas-activated protein] + ADP + H(+). The enzyme catalyses L-seryl-[protein] + ATP = O-phospho-L-seryl-[protein] + ADP + H(+). The catalysed reaction is L-threonyl-[protein] + ATP = O-phospho-L-threonyl-[protein] + ADP + H(+). Phosphorylates the splicing regulator TIA1, thereby promoting the inclusion of FAS exon 6, which leads to an mRNA encoding a pro-apoptotic form of the receptor. Required for the biogenesis of some mitochondrial-encoded mRNAs, specifically stabilizes ND6 (NADH dehydrogenase complex subunit 6) mRNA, and regulates its levels. In Mus musculus (Mouse), this protein is Fas-activated serine/threonine kinase (Fastk).